The sequence spans 436 residues: MARTKSRKRSGNNQNKNASVVNNKAEIAAMIDARRLEQKKKGGVTNSKGKTNKVVDAKLEKEFKDVLQRFQVQENDTPKEITKDEKNNHVVIVEKNPVMNRKHTAEDELEDTPSDGIEEHLSARKRRKTEKPSLSQLKSQVPYPQIIEWYDCDARYPGLLASIKCTKNVIPVPSHWQSKKEYLSGRSLLGKRPFELPDIIKKTNIEQMRSTLPQSGLDGQDEKSLKEASRARVQPKMGALDLDYKKLHDVFFKIGANWKPDHLLCFGDVYYENRNLFEETNWKRMVDHKRPGRISQELRAIMNLPEGQLPPWCMKMKDIGLPTGYPDLKIAGLNWDITNLKGDVYGKIIPNHHSRSKKQGRNYFGALISFETPEFENSKEDTQANAENGRQDDKIDDEVEHKLDHFQEDISEVTSAEEKLERNEEESEKQLYTVLK.

Basic residues predominate over residues 1-10 (MARTKSRKRS). Residues 1-22 (MARTKSRKRSGNNQNKNASVVN) are disordered. Low complexity predominate over residues 12–22 (NNQNKNASVVN). Thr-104 and Thr-112 each carry phosphothreonine. Phosphoserine is present on Ser-114. Residues 374–436 (EFENSKEDTQ…SEKQLYTVLK (63 aa)) are disordered. Over residues 389-408 (GRQDDKIDDEVEHKLDHFQE) the composition is skewed to basic and acidic residues.

It to mammalian SAP 145. Some, to C.elegans ZK632.11. In terms of assembly, belongs to the CWC complex (or CEF1-associated complex), a spliceosome sub-complex reminiscent of a late-stage spliceosome composed of the U2, U5 and U6 snRNAs and at least BUD13, BUD31, BRR2, CDC40, CEF1, CLF1, CUS1, CWC2, CWC15, CWC21, CWC22, CWC23, CWC24, CWC25, CWC27, ECM2, HSH155, IST3, ISY1, LEA1, MSL1, NTC20, PRP8, PRP9, PRP11, PRP19, PRP21, PRP22, PRP45, PRP46, SLU7, SMB1, SMD1, SMD2, SMD3, SMX2, SMX3, SNT309, SNU114, SPP2, SYF1, SYF2, RSE1 and YJU2. Interacts with RDS3.

The protein resides in the nucleus. Functionally, essential splicing protein required for U2 snRNP binding to pre-mRNA during spliceosome assembly. The protein is Cold sensitive U2 snRNA suppressor 1 (CUS1) of Saccharomyces cerevisiae (strain ATCC 204508 / S288c) (Baker's yeast).